We begin with the raw amino-acid sequence, 67 residues long: Protein AaeX (67 aa).

2 helical membrane-spanning segments follow: residues 3-23 and 43-63; these read LFPV…ELLL and FVWH…YLIS.

It belongs to the AaeX family.

It localises to the cell membrane. This is Protein AaeX from Escherichia coli (strain K12 / DH10B).